A 317-amino-acid polypeptide reads, in one-letter code: F-box protein FBW2 (317 aa).

An F-box domain is found at 7 to 54 (FRHWDELIPDALGLIFSHLPLQEVLTVVPRVCKAWNRAVTGPYCWQEI).

In terms of assembly, part of a SCF (SKP1-cullin-F-box) protein ligase complex. Interacts with CUL1, CUL2 and SPK1B/ASK2.

Its subcellular location is the nucleus. The protein operates within protein modification; protein ubiquitination. Functionally, component of SCF(ASK-cullin-F-box) E3 ubiquitin ligase complexes, which may mediate the ubiquitination and subsequent proteasomal degradation of target proteins. The chain is F-box protein FBW2 (FBW2) from Arabidopsis thaliana (Mouse-ear cress).